The primary structure comprises 514 residues: Major facilitator superfamily domain-containing protein 4A (514 aa).

5 helical membrane-spanning segments follow: residues 19-39 (LTYWSVFFSFGLCIAFLGPTL), 53-73 (ISWVFFSQQLCLLLGSALGGV), 82-102 (LWALFTSSLAISLVFAVIPFC), 107-127 (VLASVMALAGLAMGCIDTVAN), and 139-159 (AVFLQVLHFFVGFGALLSPLI). Residue Asn-177 is glycosylated (N-linked (GlcNAc...) asparagine). Transmembrane regions (helical) follow at residues 221-241 (YAFWIMALINLPVPMAVLMLL), 307-327 (FFAIHITGALVLFMTDGLTGA), 347-367 (VAGYLPSLFWGFITLGRLLSI), 376-396 (ATMVFINVVGVVVTFLVLLIF), 400-420 (VVFLFVGTASLGLFLSSTFPS), 438-458 (VLVTGAGVGEMVLQMLVGSIF), and 466-486 (FLVCGVIFGCLAFTFYILLLF).

Belongs to the major facilitator superfamily.

The protein localises to the membrane. This is Major facilitator superfamily domain-containing protein 4A from Homo sapiens (Human).